Reading from the N-terminus, the 402-residue chain is Glutamyl-tRNA reductase (402 aa).

Residues 48–51, Ser91, 96–98, and Gln102 contribute to the substrate site; these read TCNR and EDQ. Cys49 serves as the catalytic Nucleophile. NADP(+) is bound at residue 171–176; it reads GAGKMG.

This sequence belongs to the glutamyl-tRNA reductase family. As to quaternary structure, homodimer.

It catalyses the reaction (S)-4-amino-5-oxopentanoate + tRNA(Glu) + NADP(+) = L-glutamyl-tRNA(Glu) + NADPH + H(+). The protein operates within porphyrin-containing compound metabolism; protoporphyrin-IX biosynthesis; 5-aminolevulinate from L-glutamyl-tRNA(Glu): step 1/2. Its function is as follows. Catalyzes the NADPH-dependent reduction of glutamyl-tRNA(Glu) to glutamate 1-semialdehyde (GSA). This chain is Glutamyl-tRNA reductase, found in Methanothermobacter thermautotrophicus (strain ATCC 29096 / DSM 1053 / JCM 10044 / NBRC 100330 / Delta H) (Methanobacterium thermoautotrophicum).